The following is a 143-amino-acid chain: MLIGEYKHVVDSKGRIILPSKFREELGERFILTKGLDNCLFGYSLKEWGVLEEKLKKLPLTSKEARTFLRFFFAGACECEVDKQGRVLIPQNLREYAGIQKEVFIIGVMTRIEIWSENNWLKEMTNENLSVDRIAQKMEELGI.

2 consecutive SpoVT-AbrB domains span residues 5 to 47 (EYKH…SLKE) and 76 to 119 (ACEC…SENN).

This sequence belongs to the MraZ family. As to quaternary structure, forms oligomers.

Its subcellular location is the cytoplasm. It localises to the nucleoid. The polypeptide is Transcriptional regulator MraZ (Caldicellulosiruptor bescii (strain ATCC BAA-1888 / DSM 6725 / KCTC 15123 / Z-1320) (Anaerocellum thermophilum)).